Consider the following 415-residue polypeptide: Serine hydroxymethyltransferase (415 aa).

Residues L122 and 126 to 128 (GHL) contribute to the (6S)-5,6,7,8-tetrahydrofolate site. At K230 the chain carries N6-(pyridoxal phosphate)lysine.

This sequence belongs to the SHMT family. As to quaternary structure, homodimer. Requires pyridoxal 5'-phosphate as cofactor.

The protein localises to the cytoplasm. The enzyme catalyses (6R)-5,10-methylene-5,6,7,8-tetrahydrofolate + glycine + H2O = (6S)-5,6,7,8-tetrahydrofolate + L-serine. It functions in the pathway one-carbon metabolism; tetrahydrofolate interconversion. It participates in amino-acid biosynthesis; glycine biosynthesis; glycine from L-serine: step 1/1. Catalyzes the reversible interconversion of serine and glycine with tetrahydrofolate (THF) serving as the one-carbon carrier. This reaction serves as the major source of one-carbon groups required for the biosynthesis of purines, thymidylate, methionine, and other important biomolecules. Also exhibits THF-independent aldolase activity toward beta-hydroxyamino acids, producing glycine and aldehydes, via a retro-aldol mechanism. This Leptothrix cholodnii (strain ATCC 51168 / LMG 8142 / SP-6) (Leptothrix discophora (strain SP-6)) protein is Serine hydroxymethyltransferase.